We begin with the raw amino-acid sequence, 1211 residues long: DNA-directed RNA polymerase subunit beta' (1211 aa).

Zn(2+)-binding residues include Cys-60, Cys-62, Cys-75, and Cys-78. 3 residues coordinate Mg(2+): Asp-450, Asp-452, and Asp-454. Zn(2+)-binding residues include Cys-819, Cys-893, Cys-900, and Cys-903.

The protein belongs to the RNA polymerase beta' chain family. The RNAP catalytic core consists of 2 alpha, 1 beta, 1 beta' and 1 omega subunit. When a sigma factor is associated with the core the holoenzyme is formed, which can initiate transcription. It depends on Mg(2+) as a cofactor. The cofactor is Zn(2+).

It carries out the reaction RNA(n) + a ribonucleoside 5'-triphosphate = RNA(n+1) + diphosphate. Functionally, DNA-dependent RNA polymerase catalyzes the transcription of DNA into RNA using the four ribonucleoside triphosphates as substrates. The chain is DNA-directed RNA polymerase subunit beta' from Streptococcus equi subsp. zooepidemicus (strain H70).